A 662-amino-acid polypeptide reads, in one-letter code: PAN2-PAN3 deadenylation complex subunit PAN3 (662 aa).

Disordered stretches follow at residues 1–26 (MASA…AREN) and 59–131 (TTYQ…RAET). Residues 26-55 (NAKDTLCRNVTIYGRCRYEDKGCAFNHDPH) form a C3H1-type zinc finger. A compositionally biased stretch (polar residues) spans 72–85 (DSPSFTPSLLSSNG). Low complexity predominate over residues 86–102 (SSPTTASVTAKKAATIS). The segment covering 114–126 (RNITSRSNTSTPS) has biased composition (polar residues). The segment at 265-525 (QTLPNTQLPA…NIDIFITGIS (261 aa)) is pseudokinase domain. ATP is bound by residues Arg-317, 366–373 (DYHPLSKT), and 425–426 (SK). Residues 526–564 (SQLMSTFDSALHLDDELTSDLSRELENGRLVRLVTKLNF) adopt a coiled-coil conformation. The segment at 565 to 662 (VNERPEYEHD…ALLKPTRRLH (98 aa)) is knob domain.

The protein belongs to the protein kinase superfamily. PAN3 family. In terms of assembly, homodimer. Forms a heterotrimer with a catalytic subunit pan2 to form the poly(A)-nuclease (PAN) deadenylation complex. Interacts (via PAM-2 motif) with poly(A)-binding protein pab1 (via PABC domain), conferring substrate specificity of the enzyme complex.

Its subcellular location is the cytoplasm. Its function is as follows. Regulatory subunit of the poly(A)-nuclease (PAN) deadenylation complex, one of two cytoplasmic mRNA deadenylases involved in mRNA turnover. PAN specifically shortens poly(A) tails of RNA and the activity is stimulated by poly(A)-binding protein pab1. PAN deadenylation is followed by rapid degradation of the shortened mRNA tails by the CCR4-NOT complex. Deadenylated mRNAs are then degraded by two alternative mechanisms, namely exosome-mediated 3'-5' exonucleolytic degradation, or deadenylation-dependent mRNA decaping and subsequent 5'-3' exonucleolytic degradation by xrn1. May also be involved in post-transcriptional maturation of mRNA poly(A) tails. pan3 acts as a positive regulator for PAN activity, recruiting the catalytic subunit pan2 to mRNA via its interaction with RNA and with pab1. This Aspergillus oryzae (strain ATCC 42149 / RIB 40) (Yellow koji mold) protein is PAN2-PAN3 deadenylation complex subunit PAN3.